Reading from the N-terminus, the 129-residue chain is UPF0344 protein SSP1805 (129 aa).

4 helical membrane-spanning segments follow: residues 1-21, 36-56, 68-88, and 100-120; these read MLHMHIASWVLLIILFFAAYF, IHMLLRLFMLLVLISGFWVWI, MLLTLKMICGVAVVALMEVTI, and LMWTTIVVIILTMIIGIILPM.

It belongs to the UPF0344 family.

It localises to the cell membrane. The protein is UPF0344 protein SSP1805 of Staphylococcus saprophyticus subsp. saprophyticus (strain ATCC 15305 / DSM 20229 / NCIMB 8711 / NCTC 7292 / S-41).